The chain runs to 140 residues: 3-hydroxyacyl-[acyl-carrier-protein] dehydratase FabZ (140 aa).

His47 is a catalytic residue.

This sequence belongs to the thioester dehydratase family. FabZ subfamily.

It localises to the cytoplasm. It catalyses the reaction a (3R)-hydroxyacyl-[ACP] = a (2E)-enoyl-[ACP] + H2O. Functionally, involved in unsaturated fatty acids biosynthesis. Catalyzes the dehydration of short chain beta-hydroxyacyl-ACPs and long chain saturated and unsaturated beta-hydroxyacyl-ACPs. The protein is 3-hydroxyacyl-[acyl-carrier-protein] dehydratase FabZ of Streptococcus gordonii (strain Challis / ATCC 35105 / BCRC 15272 / CH1 / DL1 / V288).